Here is a 225-residue protein sequence, read N- to C-terminus: MAEGETKSPGPKKCGPYISSVTSQSVNLMIRGVVLFFIGVFLALVLNLLQIQRNVTLFPPDVIASIFSSAWWVPPCCGTASAVIGLLYPCIDRHLGEPHKFKREWSSVMRCVAVFVGINHASAKVDFDNNIQLSLTLAALSIGLWWTFDRSRSGFGLGVGIAFLATLVTQLLVYNGVYQYTSPDFLYVRSWLPCIFFAGGITMGNIGRQLAMYECKVIAEKSHQE.

The Cytoplasmic portion of the chain corresponds to 1 to 28; sequence MAEGETKSPGPKKCGPYISSVTSQSVNL. The helical transmembrane segment at 29 to 51 threads the bilayer; that stretch reads MIRGVVLFFIGVFLALVLNLLQI. Residues 52-70 lie on the Lumenal side of the membrane; sequence QRNVTLFPPDVIASIFSSA. Residues 71-88 form a helical membrane-spanning segment; that stretch reads WWVPPCCGTASAVIGLLY. At 89–103 the chain is on the cytoplasmic side; the sequence is PCIDRHLGEPHKFKR. The helical transmembrane segment at 104–126 threads the bilayer; that stretch reads EWSSVMRCVAVFVGINHASAKVD. Residues 127 to 129 lie on the Lumenal side of the membrane; the sequence is FDN. A helical membrane pass occupies residues 130–148; it reads NIQLSLTLAALSIGLWWTF. At 149–153 the chain is on the cytoplasmic side; it reads DRSRS. S151 carries the post-translational modification Phosphoserine. Residues 154 to 175 form a helical membrane-spanning segment; it reads GFGLGVGIAFLATLVTQLLVYN. The Lumenal segment spans residues 176–189; that stretch reads GVYQYTSPDFLYVR. The chain crosses the membrane as a helical span at residues 190–207; it reads SWLPCIFFAGGITMGNIG. Residues 208–225 are Cytoplasmic-facing; the sequence is RQLAMYECKVIAEKSHQE. C215 carries the post-translational modification Cysteine sulfenic acid (-SOH); alternate. A Glycyl cysteine thioester (Cys-Gly) (interchain with G-Cter in ubiquitin); alternate cross-link involves residue C215. A KxHxx motif is present at residues 219–225; that stretch reads AEKSHQE.

The protein belongs to the INSIG family. Interacts with SCAP; interaction is direct and only takes place in the presence of sterols; it prevents interaction between SCAP and the coat protein complex II (COPII). Associates with the SCAP-SREBP complex (composed of SCAP and SREBF1/SREBP1 or SREBF2/SREBP2); association is mediated via its interaction with SCAP and only takes place in the presence of sterols. Interacts with RNF139. Interacts with RNF145. Phosphorylation at Ser-151 by PCK1 reduces binding to oxysterol, disrupting the interaction between INSIG2 and SCAP, thereby promoting nuclear translocation of SREBP proteins (SREBF1/SREBP1 or SREBF2/SREBP2) and subsequent transcription of downstream lipogenesis-related genes. In terms of processing, polyubiquitinated by AMFR/gp78 at Cys-215 in some tissues such as adipose tissues, undifferentiated myoblasts and liver, leading to its degradation. In differentiated myotubes, Cys-215 oxidation prevents ubiquitination at the same site, resulting in protein stabilization. Post-translationally, oxidized at Cys-215 in differentiated myotubes, preventing ubiquitination at the same site, and resulting in protein stabilization.

The protein resides in the endoplasmic reticulum membrane. Oxysterol-binding protein that mediates feedback control of cholesterol synthesis by controlling both endoplasmic reticulum to Golgi transport of SCAP and degradation of HMGCR. Acts as a negative regulator of cholesterol biosynthesis by mediating the retention of the SCAP-SREBP complex in the endoplasmic reticulum, thereby blocking the processing of sterol regulatory element-binding proteins (SREBPs) SREBF1/SREBP1 and SREBF2/SREBP2. Binds oxysterol, including 22-hydroxycholesterol, 24-hydroxycholesterol, 25-hydroxycholesterol and 27-hydroxycholesterol, regulating interaction with SCAP and retention of the SCAP-SREBP complex in the endoplasmic reticulum. In presence of oxysterol, interacts with SCAP, retaining the SCAP-SREBP complex in the endoplasmic reticulum, thereby preventing SCAP from escorting SREBF1/SREBP1 and SREBF2/SREBP2 to the Golgi. Sterol deprivation or phosphorylation by PCK1 reduce oxysterol-binding, disrupting the interaction between INSIG2 and SCAP, thereby promoting Golgi transport of the SCAP-SREBP complex, followed by processing and nuclear translocation of SREBF1/SREBP1 and SREBF2/SREBP2. Also regulates cholesterol synthesis by regulating degradation of HMGCR: initiates the sterol-mediated ubiquitin-mediated endoplasmic reticulum-associated degradation (ERAD) of HMGCR via recruitment of the reductase to the ubiquitin ligase RNF139. This is Insulin-induced gene 2 protein from Sus scrofa (Pig).